Reading from the N-terminus, the 348-residue chain is Phenylalanine--tRNA ligase alpha subunit (348 aa).

Glu268 lines the Mg(2+) pocket.

This sequence belongs to the class-II aminoacyl-tRNA synthetase family. Phe-tRNA synthetase alpha subunit type 1 subfamily. As to quaternary structure, tetramer of two alpha and two beta subunits. The cofactor is Mg(2+).

It is found in the cytoplasm. It carries out the reaction tRNA(Phe) + L-phenylalanine + ATP = L-phenylalanyl-tRNA(Phe) + AMP + diphosphate + H(+). This Bordetella bronchiseptica (strain ATCC BAA-588 / NCTC 13252 / RB50) (Alcaligenes bronchisepticus) protein is Phenylalanine--tRNA ligase alpha subunit.